Consider the following 605-residue polypeptide: Insulin-like growth factor-binding protein complex acid labile subunit (605 aa).

Residues methionine 1–glycine 27 form the signal peptide. Positions threonine 32–glycine 74 constitute an LRRNT domain. Intrachain disulfides connect cysteine 41/cysteine 47 and cysteine 45/cysteine 60. Asparagine 64, asparagine 85, and asparagine 96 each carry an N-linked (GlcNAc...) asparagine glycan. 19 LRR repeats span residues glycine 75 to asparagine 96, serine 99 to glycine 120, asparagine 123 to tyrosine 144, alanine 147 to glycine 168, asparagine 171 to glycine 192, glycine 195 to glycine 216, glutamate 219 to glutamine 240, arginine 243 to glycine 264, alanine 267 to glycine 288, glycine 291 to aspartate 312, phenylalanine 315 to glycine 336, glutamine 339 to glycine 360, asparagine 363 to glycine 384, lysine 387 to glycine 408, glycine 411 to glycine 432, glutamate 435 to glycine 456, lysine 459 to proline 480, arginine 483 to serine 504, and arginine 507 to leucine 528. Residue asparagine 368 is glycosylated (N-linked (GlcNAc...) asparagine). The N-linked (GlcNAc...) asparagine glycan is linked to asparagine 515. The LRRCT domain maps to asparagine 536–cysteine 605. Disulfide bonds link cysteine 540–cysteine 583, cysteine 542–cysteine 605, and cysteine 566–cysteine 571. An N-linked (GlcNAc...) asparagine glycan is attached at asparagine 580.

As to quaternary structure, forms a ternary complex with IGF1 and IGFBP3.

It localises to the secreted. It is found in the extracellular space. Functionally, involved in protein-protein interactions that result in protein complexes, receptor-ligand binding or cell adhesion. This chain is Insulin-like growth factor-binding protein complex acid labile subunit (IGFALS), found in Papio hamadryas (Hamadryas baboon).